We begin with the raw amino-acid sequence, 156 residues long: Large ribosomal subunit protein uL22 (156 aa).

The protein belongs to the universal ribosomal protein uL22 family. As to quaternary structure, part of the 50S ribosomal subunit.

This protein binds specifically to 23S rRNA. It makes multiple contacts with different domains of the 23S rRNA in the assembled 50S subunit and ribosome. Its function is as follows. The globular domain of the protein is located near the polypeptide exit tunnel on the outside of the subunit, while an extended beta-hairpin is found that lines the wall of the exit tunnel in the center of the 70S ribosome. The chain is Large ribosomal subunit protein uL22 from Aeropyrum pernix (strain ATCC 700893 / DSM 11879 / JCM 9820 / NBRC 100138 / K1).